A 496-amino-acid polypeptide reads, in one-letter code: uncharacterized protein (496 aa).

Residues 118-129 (LDRPFIKPRREN) are compositionally biased toward basic and acidic residues. Residues 118-187 (LDRPFIKPRR…NPHQSNRNTS (70 aa)) form a disordered region. A compositionally biased stretch (polar residues) spans 151–187 (TSDSQYASPFENHSITNLPIGQKQPFNNPHQSNRNTS).

This is an uncharacterized protein from Acanthamoeba polyphaga mimivirus (APMV).